We begin with the raw amino-acid sequence, 180 residues long: Putative manganese efflux pump MntP (180 aa).

Helical transmembrane passes span 6-26 (LFALAVALGTDAFSLCIGIGI), 34-54 (IALISLTVLIFHILMPLLGWY), 67-87 (ASIAGALLLLYLGGKMIWDTI), 103-123 (GGLLLLSASVSMDALSVGFTL), 130-150 (LVLAAGVIGLVAGMMTFAGLT), and 159-179 (IGERAELVGGIILVGIGVKLF).

Belongs to the MntP (TC 9.B.29) family.

It localises to the cell membrane. Probably functions as a manganese efflux pump. The chain is Putative manganese efflux pump MntP from Desulforamulus reducens (strain ATCC BAA-1160 / DSM 100696 / MI-1) (Desulfotomaculum reducens).